A 281-amino-acid chain; its full sequence is MIDTVTDLSRLRGIVADWRRQGLRVALVPTMGNLHAGHFSLVMLARHYADRVVSSVFVNPTQFGPHEDFQRYPRTPEADMRGLEHVGCDVLWLPSVETMYPLGTERTVRLFIPCVSDVLEGTFRPGHFEGVCTVVARLFNQVLPDVAVFGKKDYQQLVVIRQMVVDLAFPIEILGGCIVRESDGLAMSSRNQYLSMQQRPQAAEIHRTLIAMRDAVMSGGVHADVEAEAVRRLEAAGFQVDYAVIRLPDLCEPIDGIVISQGIALVAARLGNTRLIDNLEF.

An ATP-binding site is contributed by 31–38; sequence MGNLHAGH. The Proton donor role is filled by H38. Q62 serves as a coordination point for (R)-pantoate. Q62 contacts beta-alanine. 150–153 is an ATP binding site; sequence GKKD. (R)-pantoate is bound at residue Q156. ATP is bound by residues V179 and 187–190; that span reads MSSR.

This sequence belongs to the pantothenate synthetase family. In terms of assembly, homodimer.

It is found in the cytoplasm. The catalysed reaction is (R)-pantoate + beta-alanine + ATP = (R)-pantothenate + AMP + diphosphate + H(+). It functions in the pathway cofactor biosynthesis; (R)-pantothenate biosynthesis; (R)-pantothenate from (R)-pantoate and beta-alanine: step 1/1. Its function is as follows. Catalyzes the condensation of pantoate with beta-alanine in an ATP-dependent reaction via a pantoyl-adenylate intermediate. The polypeptide is Pantothenate synthetase (Xylella fastidiosa (strain M23)).